Consider the following 102-residue polypeptide: Large ribosomal subunit protein uL24 (102 aa).

It belongs to the universal ribosomal protein uL24 family. Part of the 50S ribosomal subunit.

In terms of biological role, one of two assembly initiator proteins, it binds directly to the 5'-end of the 23S rRNA, where it nucleates assembly of the 50S subunit. Functionally, one of the proteins that surrounds the polypeptide exit tunnel on the outside of the subunit. The sequence is that of Large ribosomal subunit protein uL24 from Finegoldia magna (strain ATCC 29328 / DSM 20472 / WAL 2508) (Peptostreptococcus magnus).